Here is a 361-residue protein sequence, read N- to C-terminus: DNA replication and repair protein RecF (361 aa).

30 to 37 is an ATP binding site; that stretch reads GPNGSGKT.

This sequence belongs to the RecF family.

The protein resides in the cytoplasm. The RecF protein is involved in DNA metabolism; it is required for DNA replication and normal SOS inducibility. RecF binds preferentially to single-stranded, linear DNA. It also seems to bind ATP. The protein is DNA replication and repair protein RecF of Yersinia pestis.